An 814-amino-acid chain; its full sequence is Acyl-coenzyme A dehydrogenase (814 aa).

Glutamate 497 acts as the Proton acceptor in catalysis.

The protein belongs to the acyl-CoA dehydrogenase family. It depends on FAD as a cofactor.

It catalyses the reaction a medium-chain 2,3-saturated fatty acyl-CoA + oxidized [electron-transfer flavoprotein] + H(+) = a medium-chain (2E)-enoyl-CoA + reduced [electron-transfer flavoprotein]. The catalysed reaction is a long-chain 2,3-saturated fatty acyl-CoA + oxidized [electron-transfer flavoprotein] + H(+) = a long-chain (2E)-enoyl-CoA + reduced [electron-transfer flavoprotein]. The protein operates within lipid metabolism; fatty acid beta-oxidation. In terms of biological role, catalyzes the dehydrogenation of acyl-coenzymes A (acyl-CoAs) to 2-enoyl-CoAs, the first step of the beta-oxidation cycle of fatty acid degradation. Is required for the utilization of medium- and long-chain fatty acids as sole carbon sources for growth. Is needed for bacterial survival during carbone-source starvation. The protein is Acyl-coenzyme A dehydrogenase (fadE) of Salmonella typhi.